Consider the following 437-residue polypeptide: Methylenetetrahydrofolate--tRNA-(uracil-5-)-methyltransferase TrmFO (437 aa).

An FAD-binding site is contributed by 10–15; the sequence is GGGLAG.

Belongs to the MnmG family. TrmFO subfamily. FAD serves as cofactor.

The protein localises to the cytoplasm. It catalyses the reaction uridine(54) in tRNA + (6R)-5,10-methylene-5,6,7,8-tetrahydrofolate + NADH + H(+) = 5-methyluridine(54) in tRNA + (6S)-5,6,7,8-tetrahydrofolate + NAD(+). The catalysed reaction is uridine(54) in tRNA + (6R)-5,10-methylene-5,6,7,8-tetrahydrofolate + NADPH + H(+) = 5-methyluridine(54) in tRNA + (6S)-5,6,7,8-tetrahydrofolate + NADP(+). Its function is as follows. Catalyzes the folate-dependent formation of 5-methyl-uridine at position 54 (M-5-U54) in all tRNAs. The polypeptide is Methylenetetrahydrofolate--tRNA-(uracil-5-)-methyltransferase TrmFO (Geotalea daltonii (strain DSM 22248 / JCM 15807 / FRC-32) (Geobacter daltonii)).